We begin with the raw amino-acid sequence, 134 residues long: Peroxisomal testis-specific protein 1 (134 aa).

The short motif at 131-134 is the Microbody targeting signal element; the sequence is NHLL.

It localises to the peroxisome. This Homo sapiens (Human) protein is Peroxisomal testis-specific protein 1 (PXT1).